A 403-amino-acid chain; its full sequence is 4-hydroxy-3-methylbut-2-enyl diphosphate reductase (403 aa).

A [4Fe-4S] cluster-binding site is contributed by Cys-66. (2E)-4-hydroxy-3-methylbut-2-enyl diphosphate is bound at residue His-96. His-96 is a binding site for dimethylallyl diphosphate. His-96 lines the isopentenyl diphosphate pocket. Cys-157 is a [4Fe-4S] cluster binding site. His-185 provides a ligand contact to (2E)-4-hydroxy-3-methylbut-2-enyl diphosphate. His-185 is a dimethylallyl diphosphate binding site. His-185 is a binding site for isopentenyl diphosphate. Glu-187 acts as the Proton donor in catalysis. Thr-250 lines the (2E)-4-hydroxy-3-methylbut-2-enyl diphosphate pocket. Cys-288 lines the [4Fe-4S] cluster pocket. Residues Ser-317, Ser-318, Asn-319, and Ser-379 each contribute to the (2E)-4-hydroxy-3-methylbut-2-enyl diphosphate site. Dimethylallyl diphosphate contacts are provided by Ser-317, Ser-318, Asn-319, and Ser-379. Ser-317, Ser-318, Asn-319, and Ser-379 together coordinate isopentenyl diphosphate.

The protein belongs to the IspH family. Requires [4Fe-4S] cluster as cofactor.

The enzyme catalyses isopentenyl diphosphate + 2 oxidized [2Fe-2S]-[ferredoxin] + H2O = (2E)-4-hydroxy-3-methylbut-2-enyl diphosphate + 2 reduced [2Fe-2S]-[ferredoxin] + 2 H(+). The catalysed reaction is dimethylallyl diphosphate + 2 oxidized [2Fe-2S]-[ferredoxin] + H2O = (2E)-4-hydroxy-3-methylbut-2-enyl diphosphate + 2 reduced [2Fe-2S]-[ferredoxin] + 2 H(+). Its pathway is isoprenoid biosynthesis; dimethylallyl diphosphate biosynthesis; dimethylallyl diphosphate from (2E)-4-hydroxy-3-methylbutenyl diphosphate: step 1/1. It participates in isoprenoid biosynthesis; isopentenyl diphosphate biosynthesis via DXP pathway; isopentenyl diphosphate from 1-deoxy-D-xylulose 5-phosphate: step 6/6. Functionally, catalyzes the conversion of 1-hydroxy-2-methyl-2-(E)-butenyl 4-diphosphate (HMBPP) into a mixture of isopentenyl diphosphate (IPP) and dimethylallyl diphosphate (DMAPP). Acts in the terminal step of the DOXP/MEP pathway for isoprenoid precursor biosynthesis. The chain is 4-hydroxy-3-methylbut-2-enyl diphosphate reductase from Picosynechococcus sp. (strain ATCC 27264 / PCC 7002 / PR-6) (Agmenellum quadruplicatum).